The sequence spans 217 residues: Probable transaldolase (217 aa).

Catalysis depends on Lys-83, which acts as the Schiff-base intermediate with substrate.

The protein belongs to the transaldolase family. Type 3B subfamily.

It is found in the cytoplasm. It carries out the reaction D-sedoheptulose 7-phosphate + D-glyceraldehyde 3-phosphate = D-erythrose 4-phosphate + beta-D-fructose 6-phosphate. Its pathway is carbohydrate degradation; pentose phosphate pathway; D-glyceraldehyde 3-phosphate and beta-D-fructose 6-phosphate from D-ribose 5-phosphate and D-xylulose 5-phosphate (non-oxidative stage): step 2/3. Functionally, transaldolase is important for the balance of metabolites in the pentose-phosphate pathway. This is Probable transaldolase from Erythrobacter litoralis (strain HTCC2594).